The sequence spans 37 residues: Large ribosomal subunit protein bL36 (37 aa).

Belongs to the bacterial ribosomal protein bL36 family.

This is Large ribosomal subunit protein bL36 from Pelotomaculum thermopropionicum (strain DSM 13744 / JCM 10971 / SI).